The primary structure comprises 258 residues: Hydroxyethylthiazole kinase (258 aa).

M37 is a binding site for substrate. R112 and T158 together coordinate ATP. Position 185 (A185) interacts with substrate.

It belongs to the Thz kinase family. Mg(2+) serves as cofactor.

The catalysed reaction is 5-(2-hydroxyethyl)-4-methylthiazole + ATP = 4-methyl-5-(2-phosphooxyethyl)-thiazole + ADP + H(+). Its pathway is cofactor biosynthesis; thiamine diphosphate biosynthesis; 4-methyl-5-(2-phosphoethyl)-thiazole from 5-(2-hydroxyethyl)-4-methylthiazole: step 1/1. Functionally, catalyzes the phosphorylation of the hydroxyl group of 4-methyl-5-beta-hydroxyethylthiazole (THZ). This Rhizobium etli (strain CIAT 652) protein is Hydroxyethylthiazole kinase.